An 87-amino-acid polypeptide reads, in one-letter code: Small ribosomal subunit protein bS18 (87 aa).

Belongs to the bacterial ribosomal protein bS18 family. Part of the 30S ribosomal subunit. Forms a tight heterodimer with protein bS6.

Its function is as follows. Binds as a heterodimer with protein bS6 to the central domain of the 16S rRNA, where it helps stabilize the platform of the 30S subunit. In Nitratidesulfovibrio vulgaris (strain ATCC 29579 / DSM 644 / CCUG 34227 / NCIMB 8303 / VKM B-1760 / Hildenborough) (Desulfovibrio vulgaris), this protein is Small ribosomal subunit protein bS18.